A 423-amino-acid polypeptide reads, in one-letter code: Serine hydroxymethyltransferase (423 aa).

(6S)-5,6,7,8-tetrahydrofolate-binding positions include Leu120 and 124-126; that span reads GHL. An N6-(pyridoxal phosphate)lysine modification is found at Lys229. 353-355 contributes to the (6S)-5,6,7,8-tetrahydrofolate binding site; that stretch reads SPF.

Belongs to the SHMT family. Homodimer. Requires pyridoxal 5'-phosphate as cofactor.

Its subcellular location is the cytoplasm. The catalysed reaction is (6R)-5,10-methylene-5,6,7,8-tetrahydrofolate + glycine + H2O = (6S)-5,6,7,8-tetrahydrofolate + L-serine. The protein operates within one-carbon metabolism; tetrahydrofolate interconversion. It participates in amino-acid biosynthesis; glycine biosynthesis; glycine from L-serine: step 1/1. Its function is as follows. Catalyzes the reversible interconversion of serine and glycine with tetrahydrofolate (THF) serving as the one-carbon carrier. This reaction serves as the major source of one-carbon groups required for the biosynthesis of purines, thymidylate, methionine, and other important biomolecules. Also exhibits THF-independent aldolase activity toward beta-hydroxyamino acids, producing glycine and aldehydes, via a retro-aldol mechanism. In Prochlorococcus marinus (strain AS9601), this protein is Serine hydroxymethyltransferase.